Here is a 292-residue protein sequence, read N- to C-terminus: Protein LRATD1 (292 aa).

Ser-38 carries the phosphoserine modification. The LRAT domain occupies 133 to 228 (PATEQPAPAP…CRFGKREFKA (96 aa)).

Belongs to the LRATD family.

It localises to the cytoplasm. Its function is as follows. May play a role in cell morphology and motility. The protein is Protein LRATD1 of Mus musculus (Mouse).